The chain runs to 1996 residues: Protein Shroom3 (1996 aa).

The PDZ domain occupies 25–110 (YIYLEAFLEG…TLRLVVRRDV (86 aa)). A disordered region spans residues 150–173 (KHRRSEPAGRPHSWHTTKSGEKQP). Ser213 carries the phosphoserine modification. 5 disordered regions span residues 340–389 (NGQG…PARS), 437–468 (EKSP…TSIY), 568–629 (DASL…WEGD), 673–772 (RRHS…LQGF), and 788–1053 (FEQR…PESS). 2 positions are modified to phosphoserine: Ser439 and Ser443. The span at 700–718 (KAEDPGRKAAPDLGSHLDR) shows a compositional bias: basic and acidic residues. Positions 750–768 (HPHTSSLGRRGPGPGSASA) are enriched in low complexity. Polar residues predominate over residues 814 to 823 (TVSTSSTSGN). The residue at position 816 (Ser816) is a Phosphoserine. 2 stretches are compositionally biased toward basic and acidic residues: residues 826–836 (EETKAHIRFSE) and 846–859 (QHFK…EEAS). Composition is skewed to polar residues over residues 862 to 871 (PCGQQLSGGA) and 887 to 896 (RSQSTFQLSS). Phosphoserine is present on Ser890. Basic and acidic residues predominate over residues 897 to 909 (EPEREPEWRDRPG). A phosphoserine mark is found at Ser910 and Ser913. Residues 928 to 1030 (IKDAQSRVLG…SEPEKMNEVG (103 aa)) form the ASD1 domain. Low complexity predominate over residues 950-964 (APVASRSWRPRPSSA). Ser970 bears the Phosphoserine mark. Residues 1011-1027 (LTPEQKKRSYSEPEKMN) are compositionally biased toward basic and acidic residues. 2 positions are modified to phosphoserine: Ser1069 and Ser1072. Disordered regions lie at residues 1093–1115 (KTGK…LRER), 1137–1223 (SSLS…MSAE), 1315–1573 (ECPG…SFNK), and 1627–1665 (SLGG…SSED). A compositionally biased stretch (low complexity) spans 1137 to 1148 (SSLSSLREPSLQ). Ser1221 bears the Phosphoserine mark. Residues 1366-1375 (YCSQDGQTGR) show a composition bias toward polar residues. A compositionally biased stretch (basic and acidic residues) spans 1403–1417 (CEGDGPEHGVEEGTR). Ser1441 carries the phosphoserine modification. The span at 1459–1472 (KQQSLPSLCSTSDP) shows a compositional bias: polar residues. A compositionally biased stretch (basic and acidic residues) spans 1498 to 1515 (PPPHEDYEDEVFVRDPHP). Positions 1524–1536 (EPLPPPPPPPPSQ) are enriched in pro residues. Polar residues predominate over residues 1634-1649 (PIQTQSLSHDPVSGTQ). Basic and acidic residues predominate over residues 1651 to 1665 (LEKKVSPDPQKSSED). The 289-residue stretch at 1669–1957 (EALAKEIVHQ…QVKCLLESLP (289 aa)) folds into the ASD2 domain.

Belongs to the shroom family. Interacts with F-actin. Interacts with ROCK1.

It localises to the cell junction. The protein resides in the adherens junction. Its subcellular location is the cytoplasm. The protein localises to the cytoskeleton. It is found in the apical cell membrane. Its function is as follows. Controls cell shape changes in the neuroepithelium during neural tube closure. Induces apical constriction in epithelial cells by promoting the apical accumulation of F-actin and myosin II, and probably by bundling stress fibers. Induces apicobasal cell elongation by redistributing gamma-tubulin and directing the assembly of robust apicobasal microtubule arrays. This is Protein Shroom3 (SHROOM3) from Homo sapiens (Human).